The following is a 465-amino-acid chain: Cysteine--tRNA ligase (465 aa).

C28 lines the Zn(2+) pocket. Positions 30-40 (PTVYNYIHVGN) match the 'HIGH' region motif. Residues C208, H233, and E237 each coordinate Zn(2+). Residues 265–269 (KMSKS) carry the 'KMSKS' region motif. K268 is a binding site for ATP.

The protein belongs to the class-I aminoacyl-tRNA synthetase family. Monomer. Requires Zn(2+) as cofactor.

The protein resides in the cytoplasm. The enzyme catalyses tRNA(Cys) + L-cysteine + ATP = L-cysteinyl-tRNA(Cys) + AMP + diphosphate. The chain is Cysteine--tRNA ligase from Exiguobacterium sp. (strain ATCC BAA-1283 / AT1b).